Here is a 330-residue protein sequence, read N- to C-terminus: Ketol-acid reductoisomerase (NADP(+)) (330 aa).

Residues 1–181 enclose the KARI N-terminal Rossmann domain; it reads MKVYYEQDAT…GGARSGVIET (181 aa). Residues 24–27, Arg-47, and 82–85 contribute to the NADP(+) site; these read YGSQ and DQVQ. His-107 is an active-site residue. Residue Gly-133 coordinates NADP(+). Residues 182–327 form the KARI C-terminal knotted domain; sequence TFKEETETDL…GKLRGMMPWL (146 aa). The Mg(2+) site is built by Asp-190, Glu-194, Glu-226, and Glu-230. Residue Ser-251 coordinates substrate.

This sequence belongs to the ketol-acid reductoisomerase family. The cofactor is Mg(2+).

The catalysed reaction is (2R)-2,3-dihydroxy-3-methylbutanoate + NADP(+) = (2S)-2-acetolactate + NADPH + H(+). The enzyme catalyses (2R,3R)-2,3-dihydroxy-3-methylpentanoate + NADP(+) = (S)-2-ethyl-2-hydroxy-3-oxobutanoate + NADPH + H(+). It participates in amino-acid biosynthesis; L-isoleucine biosynthesis; L-isoleucine from 2-oxobutanoate: step 2/4. Its pathway is amino-acid biosynthesis; L-valine biosynthesis; L-valine from pyruvate: step 2/4. In terms of biological role, involved in the biosynthesis of branched-chain amino acids (BCAA). Catalyzes an alkyl-migration followed by a ketol-acid reduction of (S)-2-acetolactate (S2AL) to yield (R)-2,3-dihydroxy-isovalerate. In the isomerase reaction, S2AL is rearranged via a Mg-dependent methyl migration to produce 3-hydroxy-3-methyl-2-ketobutyrate (HMKB). In the reductase reaction, this 2-ketoacid undergoes a metal-dependent reduction by NADPH to yield (R)-2,3-dihydroxy-isovalerate. The sequence is that of Ketol-acid reductoisomerase (NADP(+)) from Nitratidesulfovibrio vulgaris (strain DSM 19637 / Miyazaki F) (Desulfovibrio vulgaris).